A 323-amino-acid polypeptide reads, in one-letter code: 4-hydroxy-3-methylbut-2-enyl diphosphate reductase (323 aa).

Residue Cys13 participates in [4Fe-4S] cluster binding. 2 residues coordinate (2E)-4-hydroxy-3-methylbut-2-enyl diphosphate: His42 and His75. Dimethylallyl diphosphate-binding residues include His42 and His75. 2 residues coordinate isopentenyl diphosphate: His42 and His75. Cys97 is a binding site for [4Fe-4S] cluster. His125 is a binding site for (2E)-4-hydroxy-3-methylbut-2-enyl diphosphate. Position 125 (His125) interacts with dimethylallyl diphosphate. Residue His125 coordinates isopentenyl diphosphate. Glu127 functions as the Proton donor in the catalytic mechanism. Residue Thr168 coordinates (2E)-4-hydroxy-3-methylbut-2-enyl diphosphate. Cys198 lines the [4Fe-4S] cluster pocket. Ser226, Ser227, Asn228, and Ser270 together coordinate (2E)-4-hydroxy-3-methylbut-2-enyl diphosphate. Dimethylallyl diphosphate contacts are provided by Ser226, Ser227, Asn228, and Ser270. Isopentenyl diphosphate contacts are provided by Ser226, Ser227, Asn228, and Ser270.

The protein belongs to the IspH family. It depends on [4Fe-4S] cluster as a cofactor.

The enzyme catalyses isopentenyl diphosphate + 2 oxidized [2Fe-2S]-[ferredoxin] + H2O = (2E)-4-hydroxy-3-methylbut-2-enyl diphosphate + 2 reduced [2Fe-2S]-[ferredoxin] + 2 H(+). It catalyses the reaction dimethylallyl diphosphate + 2 oxidized [2Fe-2S]-[ferredoxin] + H2O = (2E)-4-hydroxy-3-methylbut-2-enyl diphosphate + 2 reduced [2Fe-2S]-[ferredoxin] + 2 H(+). Its pathway is isoprenoid biosynthesis; dimethylallyl diphosphate biosynthesis; dimethylallyl diphosphate from (2E)-4-hydroxy-3-methylbutenyl diphosphate: step 1/1. It functions in the pathway isoprenoid biosynthesis; isopentenyl diphosphate biosynthesis via DXP pathway; isopentenyl diphosphate from 1-deoxy-D-xylulose 5-phosphate: step 6/6. Functionally, catalyzes the conversion of 1-hydroxy-2-methyl-2-(E)-butenyl 4-diphosphate (HMBPP) into a mixture of isopentenyl diphosphate (IPP) and dimethylallyl diphosphate (DMAPP). Acts in the terminal step of the DOXP/MEP pathway for isoprenoid precursor biosynthesis. The protein is 4-hydroxy-3-methylbut-2-enyl diphosphate reductase of Nitrosomonas europaea (strain ATCC 19718 / CIP 103999 / KCTC 2705 / NBRC 14298).